A 328-amino-acid polypeptide reads, in one-letter code: Biotin synthase (328 aa).

In terms of domain architecture, Radical SAM core spans 53-282 (FHGNRVDLCA…ATTIRYAGGR (230 aa)). [4Fe-4S] cluster is bound by residues cysteine 71, cysteine 75, and cysteine 78. The [2Fe-2S] cluster site is built by serine 115, cysteine 147, cysteine 207, and arginine 277.

This sequence belongs to the radical SAM superfamily. Biotin synthase family. Homodimer. [4Fe-4S] cluster serves as cofactor. The cofactor is [2Fe-2S] cluster.

It carries out the reaction (4R,5S)-dethiobiotin + (sulfur carrier)-SH + 2 reduced [2Fe-2S]-[ferredoxin] + 2 S-adenosyl-L-methionine = (sulfur carrier)-H + biotin + 2 5'-deoxyadenosine + 2 L-methionine + 2 oxidized [2Fe-2S]-[ferredoxin]. It functions in the pathway cofactor biosynthesis; biotin biosynthesis; biotin from 7,8-diaminononanoate: step 2/2. Functionally, catalyzes the conversion of dethiobiotin (DTB) to biotin by the insertion of a sulfur atom into dethiobiotin via a radical-based mechanism. The protein is Biotin synthase of Desulforudis audaxviator (strain MP104C).